We begin with the raw amino-acid sequence, 331 residues long: 6-phosphogluconolactonase (331 aa).

It belongs to the cycloisomerase 2 family.

The catalysed reaction is 6-phospho-D-glucono-1,5-lactone + H2O = 6-phospho-D-gluconate + H(+). The protein operates within carbohydrate degradation; pentose phosphate pathway; D-ribulose 5-phosphate from D-glucose 6-phosphate (oxidative stage): step 2/3. In terms of biological role, catalyzes the hydrolysis of 6-phosphogluconolactone to 6-phosphogluconate. This chain is 6-phosphogluconolactonase, found in Buchnera aphidicola subsp. Baizongia pistaciae (strain Bp).